A 216-amino-acid polypeptide reads, in one-letter code: Octanoyltransferase (216 aa).

The BPL/LPL catalytic domain maps to Lys30–Asn204. Substrate-binding positions include Arg68–His75, Ser135–Gly137, and Gly148–Ala150. Cys166 (acyl-thioester intermediate) is an active-site residue.

It belongs to the LipB family.

It localises to the cytoplasm. The catalysed reaction is octanoyl-[ACP] + L-lysyl-[protein] = N(6)-octanoyl-L-lysyl-[protein] + holo-[ACP] + H(+). It functions in the pathway protein modification; protein lipoylation via endogenous pathway; protein N(6)-(lipoyl)lysine from octanoyl-[acyl-carrier-protein]: step 1/2. In terms of biological role, catalyzes the transfer of endogenously produced octanoic acid from octanoyl-acyl-carrier-protein onto the lipoyl domains of lipoate-dependent enzymes. Lipoyl-ACP can also act as a substrate although octanoyl-ACP is likely to be the physiological substrate. This Wigglesworthia glossinidia brevipalpis protein is Octanoyltransferase.